The following is an 856-amino-acid chain: TPR repeat-containing protein TP_0123 (856 aa).

TPR repeat units lie at residues 107-140 (YAAV…VADD), 523-556 (YRTF…AEQL), and 603-636 (TVSL…ALQY).

This is TPR repeat-containing protein TP_0123 from Treponema pallidum (strain Nichols).